A 1061-amino-acid polypeptide reads, in one-letter code: MHLNRVLRETGVVVAAGLLYGSAAFAQSSTIIGTVIDAQSRQPAADVVVTATSPNLQGEQTVVTDAQGNYRIPQLPPGDYTLRFEKEQFKPYARSAIQLRLNRTIRVNVELLPEALGEVVEIVGAPPTIDVGSTTMGVNVDQEFIKRIAVARPGGKGGATRSFESLAELAPGAQNDNYGVSINGSTSPENGYVVDGLSTNDPAFGVNASPLSIEFVQDVNIITGGYMPEFGRSTGGVINAVTRSGSNEFHGSVFANWTPGTLEGTRKQIREEGTVITGQNQLQNLGDFGATLGGPILKDKLWFFAGFAPSFTRYQHTRTLNALRVDDEGNTIKDETDFTVADAIPGSARKYYADSRTIQYMGKLTYLINQDHNVSFALNGTPTSTGGLGKLSVNPQSGGLPGVLATRPGDFGLTETKANTTSLALKYAGAFADKKVLVDANLGWFHQTASTLPGDGSNLGDRTGLAGYSRMVYTTPRALTLFEALPEGQEGACGSTPEEQLVRSPVTGYGVGGPGFMSDQTLDRYQANAKATYLLNALGTHVFKAGVDVELLSFDQVKAYGGGVFFQEGSNYGVAGQGPAVHDARRYGYQTGPDSAVTQFTQVAKTTSTTVGGFLQDSWSIANRVTLNLGVRYDVQALYGGNGDLSLLLGNQWSPRIGAIVDPFANGRAKVFVNFARYYEQVPLNLMDRAFPGENRISARRSLAEPGQGTATSCDPSSFESQQATCNTDSNLLAIPESSRNVNRFYTGGTVGGTPVDPDIKAQSSDEIVVGAEYEVLANTRLGASYTHKDMNSVIEDMSRDDGNTYFLGNPGSGFAGEFPTPVRNYDNVTVYLNRTFADGWLAQANYTWSRLYGNYPGLFRPETGQLDPNILSDFDLIELLENRTGLLPFDRTHQIKVFGAKEFNISNALSASVGVSYRGSSGTPINYWGSHWAYLQDESFVLPRGAGGRTPWINTIDSNIGVNYRVSKDSVVSFTLDVFNLFNFQGVNTVDQTYTLRDIKPIPGGTPADLENLPGRVEFQDQAPRDEPFGSVDGDVNKNFKNPLSYQAPRQVRFGIRYTF.

A signal peptide spans 1–26; sequence MHLNRVLRETGVVVAAGLLYGSAAFA. A TBDR plug domain is found at 121–243; sequence EIVGAPPTID…TGGVINAVTR (123 aa). Positions 248-1061 constitute a TBDR beta-barrel domain; the sequence is EFHGSVFANW…QVRFGIRYTF (814 aa). The tract at residues 701–722 is disordered; sequence RSLAEPGQGTATSCDPSSFESQ. The segment covering 709–722 has biased composition (polar residues); it reads GTATSCDPSSFESQ.

Belongs to the TonB-dependent receptor family. Interacts with TonB. Part of a transport system composed of the outer membrane transporter Oar, the trans-periplasmic binding protein TonB and the inner membrane proteins ExbB and ExbD.

Its subcellular location is the cell outer membrane. In terms of biological role, required for secretion of the protease PopC across the bacterial outer membrane. Binds and probably transports PopC from the periplasm to the extracellular milieu. It derives its energy for transport by interacting with the trans-periplasmic membrane protein TonB. Required for cellular adhesion during fruiting body formation, a multicellular developmental program that is induced in response to starvation. This chain is TonB-dependent transporter Oar, found in Myxococcus xanthus.